We begin with the raw amino-acid sequence, 1125 residues long: Non-structural polyprotein 1A (1125 aa).

Positions 131–218 (VHQVMEKTRE…QKRLKEKENA (88 aa)) form a coiled coil. The next 6 helical transmembrane spans lie at 220-240 (VSVG…FGLI), 379-398 (VMSY…VLAG), 407-427 (APFI…CVAV), 437-457 (FILF…LLWL), 479-499 (ALVY…GVTL), and 507-527 (ILMF…CTTI). Active-site charge relay system; for serine protease activity residues include His-600, Asp-632, and Ser-697. At Tyr-834 the chain carries O-(5'-phospho-RNA)-tyrosine.

The protein belongs to the astroviridae polyprotein 1A family. As to quaternary structure, monomer. Post-translationally, cleaved by the viral and host proteases. The protease is probably autocatalytically cleaved.

The protein resides in the host membrane. It carries out the reaction RNA(n) + a ribonucleoside 5'-triphosphate = RNA(n+1) + diphosphate. Responsible for the cleavage of the polyprotein into functional products. In terms of biological role, protein covalently attached to the 5' extremity of the genomic and subgenomic RNAs. It may serve as a primer for the replicase. The sequence is that of Non-structural polyprotein 1A (ORF1) from Turkey astrovirus 2 (TAstV-2).